Consider the following 155-residue polypeptide: Arginine repressor (155 aa).

The protein belongs to the ArgR family.

The protein localises to the cytoplasm. It functions in the pathway amino-acid biosynthesis; L-arginine biosynthesis [regulation]. Functionally, regulates arginine biosynthesis genes. The chain is Arginine repressor from Histophilus somni (strain 129Pt) (Haemophilus somnus).